A 576-amino-acid polypeptide reads, in one-letter code: Phosphoenolpyruvate-protein phosphotransferase (576 aa).

The active-site Tele-phosphohistidine intermediate is H189. R296 and R332 together coordinate phosphoenolpyruvate. E431 and D455 together coordinate Mg(2+). Phosphoenolpyruvate contacts are provided by residues 454-455 (ND) and R465. C502 (proton donor) is an active-site residue.

This sequence belongs to the PEP-utilizing enzyme family. Homodimer. Mg(2+) is required as a cofactor.

Its subcellular location is the cytoplasm. It catalyses the reaction L-histidyl-[protein] + phosphoenolpyruvate = N(pros)-phospho-L-histidyl-[protein] + pyruvate. In terms of biological role, general (non sugar-specific) component of the phosphoenolpyruvate-dependent sugar phosphotransferase system (sugar PTS). This major carbohydrate active-transport system catalyzes the phosphorylation of incoming sugar substrates concomitantly with their translocation across the cell membrane. Enzyme I transfers the phosphoryl group from phosphoenolpyruvate (PEP) to the phosphoryl carrier protein (HPr). The chain is Phosphoenolpyruvate-protein phosphotransferase (ptsI) from Buchnera aphidicola subsp. Baizongia pistaciae (strain Bp).